The following is a 722-amino-acid chain: Polyribonucleotide nucleotidyltransferase (722 aa).

The Mg(2+) site is built by Asp486 and Asp492. In terms of domain architecture, KH spans 553-612 (PRITTIQIRPEFIKNVIGPGGKVIKDIIARTGAAINIEDSGRVDIASANGEAVKAAIAMI). The S1 motif domain maps to 622 to 690 (GKIYTGTVRK…KTGKIRLSRK (69 aa)). The interval 696-722 (RAAQQGAAAGEAAAQPAPAPTQPDAKA) is disordered.

Belongs to the polyribonucleotide nucleotidyltransferase family. Requires Mg(2+) as cofactor.

It localises to the cytoplasm. It carries out the reaction RNA(n+1) + phosphate = RNA(n) + a ribonucleoside 5'-diphosphate. Involved in mRNA degradation. Catalyzes the phosphorolysis of single-stranded polyribonucleotides processively in the 3'- to 5'-direction. The sequence is that of Polyribonucleotide nucleotidyltransferase from Myxococcus xanthus (strain DK1622).